The sequence spans 207 residues: MANVSLFKQDGTKNGDVELNADIFGIEPNNDVVFEAVVMQRASMRQGTHAVKNRSAVRGGGRKPWRQKGTGRARQGSIRSPQWRGGGIVFGPTPRSYAYSIPKKMRRLALKSVLSQKVLDESLVVVDEFKFETPKTKDFAQSLGNLNVDKKALLVLEEDNESAVLAARNLSNVKIVEPEGINVLDIMNSDKLVITQKALSQVEEALA.

The segment at 45–78 is disordered; it reads RQGTHAVKNRSAVRGGGRKPWRQKGTGRARQGSI. The segment covering 60–71 has biased composition (basic residues); the sequence is GGRKPWRQKGTG.

It belongs to the universal ribosomal protein uL4 family. In terms of assembly, part of the 50S ribosomal subunit.

One of the primary rRNA binding proteins, this protein initially binds near the 5'-end of the 23S rRNA. It is important during the early stages of 50S assembly. It makes multiple contacts with different domains of the 23S rRNA in the assembled 50S subunit and ribosome. In terms of biological role, forms part of the polypeptide exit tunnel. In Pediococcus pentosaceus (strain ATCC 25745 / CCUG 21536 / LMG 10740 / 183-1w), this protein is Large ribosomal subunit protein uL4.